Here is a 1243-residue protein sequence, read N- to C-terminus: DNA polymerase II large subunit (1243 aa).

This sequence belongs to the archaeal DNA polymerase II family. Heterodimer of a large subunit and a small subunit.

It carries out the reaction DNA(n) + a 2'-deoxyribonucleoside 5'-triphosphate = DNA(n+1) + diphosphate. The catalysed reaction is Exonucleolytic cleavage in the 3'- to 5'-direction to yield nucleoside 5'-phosphates.. Possesses two activities: a DNA synthesis (polymerase) and an exonucleolytic activity that degrades single-stranded DNA in the 3'- to 5'-direction. Has a template-primer preference which is characteristic of a replicative DNA polymerase. The protein is DNA polymerase II large subunit of Nanoarchaeum equitans (strain Kin4-M).